The primary structure comprises 74 residues: Putative defensin-like protein 36 (74 aa).

The signal sequence occupies residues 1-22 (MASNKVSFFLVLCLCILLAGEC). 3 disulfides stabilise this stretch: Cys-33/Cys-59, Cys-45/Cys-69, and Cys-49/Cys-71.

This sequence belongs to the DEFL family.

It is found in the secreted. The polypeptide is Putative defensin-like protein 36 (Arabidopsis thaliana (Mouse-ear cress)).